The sequence spans 427 residues: MAP kinase-interacting serine/threonine-protein kinase 1 (427 aa).

Residues 1–11 (MVSSQKLEKPI) show a composition bias toward basic and acidic residues. The segment at 1–37 (MVSSQKLEKPIEMGSSEPLPIVDSDKRRKKKRKTRAT) is disordered. Phosphothreonine; by PAK2 is present on threonine 34. Serine 39 carries the phosphoserine; by PAK2 modification. Residues 49–333 (QLTSELLGEG…AAQVLQHPWV (285 aa)) enclose the Protein kinase domain. ATP is bound by residues 55–63 (LGEGAYAKV) and lysine 78. Catalysis depends on aspartate 170, which acts as the Proton acceptor. Phosphoserine is present on residues serine 180 and serine 185. Threonine 209, threonine 214, and threonine 344 each carry phosphothreonine. The disordered stretch occupies residues 407–427 (RALAQAGRSRDANPCLTPAGL).

The protein belongs to the protein kinase superfamily. CAMK Ser/Thr protein kinase family. As to quaternary structure, interacts with the C-terminal regions of EIF4G1 and EIF4G2. Also binds to dephosphorylated ERK1 and ERK2, and to the p38 kinases. The cofactor is Mg(2+). In terms of processing, dual phosphorylation of Thr-209 and Thr-214 activates the kinase. Phosphorylation of Thr-344 activates the kinase. MAPK3/ERK1 is one of the kinases which activate MKNK1/MNK1. Phosphorylation by PAK2 leads to a reduced phosphorylation of EIF4G1. Ubiquitously expressed in all tissues examined, with high levels in skeletal muscle.

It catalyses the reaction L-seryl-[protein] + ATP = O-phospho-L-seryl-[protein] + ADP + H(+). The catalysed reaction is L-threonyl-[protein] + ATP = O-phospho-L-threonyl-[protein] + ADP + H(+). Phosphorylated and activated by the p38 kinases and kinases in the Erk pathway. In terms of biological role, may play a role in the response to environmental stress and cytokines. Appears to regulate translation by phosphorylating EIF4E, thus increasing the affinity of this protein for the 7-methylguanosine-containing mRNA cap. The protein is MAP kinase-interacting serine/threonine-protein kinase 1 (Mknk1) of Mus musculus (Mouse).